The following is a 51-amino-acid chain: Cuticle protein CP575 (51 aa).

The Chitin-binding type R&amp;R domain maps to 1–51 (GDIIDVDNDLFEHEQDGVAGTSVHGEYEAYDAYGNEYEVKYIADHLGFRVL).

As to expression, calcified shell.

This is Cuticle protein CP575 from Cancer pagurus (Rock crab).